Consider the following 1354-residue polypeptide: Tensin homolog (1354 aa).

The 170-residue stretch at 38 to 207 (MKDRKEGVQV…GYFSSLLSGR (170 aa)) folds into the Phosphatase tensin-type domain. Cysteine 144 acts as the Phosphocysteine intermediate in catalysis. Residues 212-337 (SDPLYLHNII…VTVELVVSHT (126 aa)) form the C2 tensin-type domain. Disordered regions lie at residues 380–442 (EYSE…DVVP), 597–616 (STLQ…RTLN), 638–660 (SNTA…SVQL), 692–720 (DVRG…NNTP), 734–754 (SVTT…EADA), 794–879 (AANN…DRQR), and 1015–1035 (NGER…HNGY). Polar residues predominate over residues 391-401 (SSKSANPINNN). A compositionally biased stretch (pro residues) spans 408–417 (VGPPVPPKPS). 3 stretches are compositionally biased toward polar residues: residues 704 to 720 (HNAS…NNTP), 734 to 747 (SVTT…STPS), and 794 to 804 (AANNDENQHNL). Residues 821–843 (AEFRREEERLRNTRSPYGEERWR) are compositionally biased toward basic and acidic residues. The segment covering 1017-1033 (ERGGSGHAAGGGGGGHN) has biased composition (gly residues). The SH2 domain maps to 1083–1187 (WYKPTISREQ…ALPTKLVLPD (105 aa)). A PTB domain is found at 1209–1353 (ACNVVYVGSV…NKVMLAQKNR (145 aa)).

This sequence belongs to the PTEN phosphatase protein family. In terms of assembly, may interact (via SH2 domain) with receptor svh-2 (when tyrosine-phosphorylated). May interact (via C-terminus) with integrin pat-3. Expressed in ventral motor neurons, including ventral and dorsal D-type neurons, and in a subset of cells in the head.

The protein resides in the cell projection. The protein localises to the axon. It carries out the reaction O-phospho-L-tyrosyl-[protein] + H2O = L-tyrosyl-[protein] + phosphate. Functionally, probable phosphatase which regulates axon regeneration after injury by linking the svh-2 and integrin signaling pathways. In terms of biological role, not involved in axon regeneration after injury. The sequence is that of Tensin homolog from Caenorhabditis elegans.